The chain runs to 217 residues: Small ribosomal subunit protein eS6 (217 aa).

This sequence belongs to the eukaryotic ribosomal protein eS6 family.

This is Small ribosomal subunit protein eS6 from Hyperthermus butylicus (strain DSM 5456 / JCM 9403 / PLM1-5).